The sequence spans 876 residues: DNA mismatch repair protein MutS (876 aa).

626 to 633 (GPNMGGKS) is a binding site for ATP.

Belongs to the DNA mismatch repair MutS family.

Its function is as follows. This protein is involved in the repair of mismatches in DNA. It is possible that it carries out the mismatch recognition step. This protein has a weak ATPase activity. The polypeptide is DNA mismatch repair protein MutS (Bordetella bronchiseptica (strain ATCC BAA-588 / NCTC 13252 / RB50) (Alcaligenes bronchisepticus)).